The following is a 243-amino-acid chain: tRNA (guanine-N(1)-)-methyltransferase (243 aa).

S-adenosyl-L-methionine-binding positions include Gly111 and 130-135; that span reads IGDYVL.

This sequence belongs to the RNA methyltransferase TrmD family. As to quaternary structure, homodimer.

It is found in the cytoplasm. The catalysed reaction is guanosine(37) in tRNA + S-adenosyl-L-methionine = N(1)-methylguanosine(37) in tRNA + S-adenosyl-L-homocysteine + H(+). Specifically methylates guanosine-37 in various tRNAs. The chain is tRNA (guanine-N(1)-)-methyltransferase from Acholeplasma laidlawii (strain PG-8A).